A 147-amino-acid chain; its full sequence is Hemoglobin subunit beta (147 aa).

The Globin domain occupies 2–147 (ELTEAQRGAI…VVSALGKQYH (146 aa)). Heme b is bound by residues H63 and H92.

The protein belongs to the globin family. In terms of assembly, heterotetramer of two alpha chains and two beta chains. In terms of tissue distribution, red blood cells.

Its function is as follows. Involved in oxygen transport from gills to the various peripheral tissues. This is Hemoglobin subunit beta (hbb) from Electrophorus electricus (Electric eel).